The sequence spans 468 residues: UDP-N-acetylmuramate--L-alanine ligase (468 aa).

An ATP-binding site is contributed by 112–118; it reads GMHGKTT.

Belongs to the MurCDEF family.

It is found in the cytoplasm. It carries out the reaction UDP-N-acetyl-alpha-D-muramate + L-alanine + ATP = UDP-N-acetyl-alpha-D-muramoyl-L-alanine + ADP + phosphate + H(+). The protein operates within cell wall biogenesis; peptidoglycan biosynthesis. In terms of biological role, cell wall formation. The polypeptide is UDP-N-acetylmuramate--L-alanine ligase (Koribacter versatilis (strain Ellin345)).